The chain runs to 268 residues: Tryptophan synthase alpha chain (268 aa).

Residues glutamate 49 and aspartate 60 each act as proton acceptor in the active site.

Belongs to the TrpA family. In terms of assembly, tetramer of two alpha and two beta chains.

The enzyme catalyses (1S,2R)-1-C-(indol-3-yl)glycerol 3-phosphate + L-serine = D-glyceraldehyde 3-phosphate + L-tryptophan + H2O. It functions in the pathway amino-acid biosynthesis; L-tryptophan biosynthesis; L-tryptophan from chorismate: step 5/5. Its function is as follows. The alpha subunit is responsible for the aldol cleavage of indoleglycerol phosphate to indole and glyceraldehyde 3-phosphate. This is Tryptophan synthase alpha chain from Photorhabdus laumondii subsp. laumondii (strain DSM 15139 / CIP 105565 / TT01) (Photorhabdus luminescens subsp. laumondii).